A 1040-amino-acid chain; its full sequence is Multidrug resistance protein MdtB (1040 aa).

Transmembrane regions (helical) follow at residues L15–G37, F345–L362, A367–L389, L396–N418, G438–F460, F472–M494, H535–I557, V867–I889, L909–V931, I968–A990, and M1000–F1022.

The protein belongs to the resistance-nodulation-cell division (RND) (TC 2.A.6) family. MdtB subfamily. Part of a tripartite efflux system composed of MdtA, MdtB and MdtC. MdtB forms a heteromultimer with MdtC.

The protein localises to the cell inner membrane. In terms of biological role, the MdtABC tripartite complex confers resistance against novobiocin and deoxycholate. This is Multidrug resistance protein MdtB from Escherichia coli O157:H7.